The primary structure comprises 112 residues: Photosystem II reaction center Psb28 protein (112 aa).

Belongs to the Psb28 family. As to quaternary structure, part of the photosystem II complex.

The protein localises to the cellular thylakoid membrane. In Microcystis aeruginosa (strain NIES-843 / IAM M-2473), this protein is Photosystem II reaction center Psb28 protein.